We begin with the raw amino-acid sequence, 368 residues long: 3-dehydroquinate synthase (368 aa).

NAD(+) is bound by residues 112–116 (GVIGD), 136–137 (TT), K149, K158, and 176–179 (TLIT). The Zn(2+) site is built by E191, H256, and H273.

Belongs to the sugar phosphate cyclases superfamily. Dehydroquinate synthase family. Co(2+) is required as a cofactor. The cofactor is Zn(2+). It depends on NAD(+) as a cofactor.

It localises to the cytoplasm. The enzyme catalyses 7-phospho-2-dehydro-3-deoxy-D-arabino-heptonate = 3-dehydroquinate + phosphate. It functions in the pathway metabolic intermediate biosynthesis; chorismate biosynthesis; chorismate from D-erythrose 4-phosphate and phosphoenolpyruvate: step 2/7. In terms of biological role, catalyzes the conversion of 3-deoxy-D-arabino-heptulosonate 7-phosphate (DAHP) to dehydroquinate (DHQ). This is 3-dehydroquinate synthase from Prochlorococcus marinus (strain NATL2A).